Here is a 145-residue protein sequence, read N- to C-terminus: D-aminoacyl-tRNA deacylase (145 aa).

The short motif at 137–138 (GP) is the Gly-cisPro motif, important for rejection of L-amino acids element.

It belongs to the DTD family. In terms of assembly, homodimer.

It is found in the cytoplasm. The catalysed reaction is glycyl-tRNA(Ala) + H2O = tRNA(Ala) + glycine + H(+). It carries out the reaction a D-aminoacyl-tRNA + H2O = a tRNA + a D-alpha-amino acid + H(+). An aminoacyl-tRNA editing enzyme that deacylates mischarged D-aminoacyl-tRNAs. Also deacylates mischarged glycyl-tRNA(Ala), protecting cells against glycine mischarging by AlaRS. Acts via tRNA-based rather than protein-based catalysis; rejects L-amino acids rather than detecting D-amino acids in the active site. By recycling D-aminoacyl-tRNA to D-amino acids and free tRNA molecules, this enzyme counteracts the toxicity associated with the formation of D-aminoacyl-tRNA entities in vivo and helps enforce protein L-homochirality. In Photobacterium profundum (strain SS9), this protein is D-aminoacyl-tRNA deacylase.